A 141-amino-acid chain; its full sequence is MVLMVNLGFVIAEFNRDITYMMEKVAEEHAEFLGATVKYKIVVPGVFDMPLAVKKLLEKDDVDAVVTIGCVIEGETEHDEIVVHNAARKIADLALQYDKPVTLGISGPGMTRLQAQERVDYGKRAVEAAVKMVKRLKALEE.

Residues Phe-14, 46-48, and 70-72 contribute to the 5-amino-6-(D-ribitylamino)uracil site; these read VFD and CVI. Residue 75 to 76 participates in (2S)-2-hydroxy-3-oxobutyl phosphate binding; sequence ET. His-78 acts as the Proton donor in catalysis. A 5-amino-6-(D-ribitylamino)uracil-binding site is contributed by Leu-103. Residue Arg-118 participates in (2S)-2-hydroxy-3-oxobutyl phosphate binding.

As to quaternary structure, forms an icosahedral capsid composed of 60 subunits, arranged as a dodecamer of pentamers.

It catalyses the reaction (2S)-2-hydroxy-3-oxobutyl phosphate + 5-amino-6-(D-ribitylamino)uracil = 6,7-dimethyl-8-(1-D-ribityl)lumazine + phosphate + 2 H2O + H(+). It functions in the pathway cofactor biosynthesis; riboflavin biosynthesis; riboflavin from 2-hydroxy-3-oxobutyl phosphate and 5-amino-6-(D-ribitylamino)uracil: step 1/2. Functionally, catalyzes the formation of 6,7-dimethyl-8-ribityllumazine by condensation of 5-amino-6-(D-ribitylamino)uracil with 3,4-dihydroxy-2-butanone 4-phosphate. This is the penultimate step in the biosynthesis of riboflavin. The polypeptide is 6,7-dimethyl-8-ribityllumazine synthase (ribH) (Methanocaldococcus jannaschii (strain ATCC 43067 / DSM 2661 / JAL-1 / JCM 10045 / NBRC 100440) (Methanococcus jannaschii)).